Reading from the N-terminus, the 361-residue chain is Isocitrate dehydrogenase [NAD] subunit 1, mitochondrial (361 aa).

The N-terminal 12 residues, 1 to 12 (MLRQGIAAQKKS), are a transit peptide targeting the mitochondrion. Substrate contacts are provided by Arg-110, Arg-141, and Asp-229. Position 229 (Asp-229) interacts with Mg(2+).

The protein belongs to the isocitrate and isopropylmalate dehydrogenases family. Octamer of two non-identical subunits IDH1 and IDH2. Mg(2+) is required as a cofactor. The cofactor is Mn(2+).

The protein localises to the mitochondrion. It catalyses the reaction D-threo-isocitrate + NAD(+) = 2-oxoglutarate + CO2 + NADH. In terms of biological role, performs an essential role in the oxidative function of the citric acid cycle. This is Isocitrate dehydrogenase [NAD] subunit 1, mitochondrial (IDH1) from Kluyveromyces lactis (strain ATCC 8585 / CBS 2359 / DSM 70799 / NBRC 1267 / NRRL Y-1140 / WM37) (Yeast).